The primary structure comprises 331 residues: Ketol-acid reductoisomerase (NADP(+)) (331 aa).

Residues 2–182 (ARMYYDSDAN…GGTRAGILET (181 aa)) form the KARI N-terminal Rossmann domain. Residues 25–28 (YGSQ), Ser51, Ser53, and 83–86 (DEVQ) contribute to the NADP(+) site. The active site involves His108. Gly134 is a binding site for NADP(+). A KARI C-terminal knotted domain is found at 183–328 (TFREETETDL…KDLRAMFSWL (146 aa)). Residues Asp191, Glu195, Glu227, and Glu231 each contribute to the Mg(2+) site. Position 252 (Ser252) interacts with substrate.

Belongs to the ketol-acid reductoisomerase family. The cofactor is Mg(2+).

It carries out the reaction (2R)-2,3-dihydroxy-3-methylbutanoate + NADP(+) = (2S)-2-acetolactate + NADPH + H(+). The enzyme catalyses (2R,3R)-2,3-dihydroxy-3-methylpentanoate + NADP(+) = (S)-2-ethyl-2-hydroxy-3-oxobutanoate + NADPH + H(+). It functions in the pathway amino-acid biosynthesis; L-isoleucine biosynthesis; L-isoleucine from 2-oxobutanoate: step 2/4. It participates in amino-acid biosynthesis; L-valine biosynthesis; L-valine from pyruvate: step 2/4. Functionally, involved in the biosynthesis of branched-chain amino acids (BCAA). Catalyzes an alkyl-migration followed by a ketol-acid reduction of (S)-2-acetolactate (S2AL) to yield (R)-2,3-dihydroxy-isovalerate. In the isomerase reaction, S2AL is rearranged via a Mg-dependent methyl migration to produce 3-hydroxy-3-methyl-2-ketobutyrate (HMKB). In the reductase reaction, this 2-ketoacid undergoes a metal-dependent reduction by NADPH to yield (R)-2,3-dihydroxy-isovalerate. This chain is Ketol-acid reductoisomerase (NADP(+)), found in Trichodesmium erythraeum (strain IMS101).